A 368-amino-acid polypeptide reads, in one-letter code: Aminomethyltransferase (368 aa).

Belongs to the GcvT family. The glycine cleavage system is composed of four proteins: P, T, L and H.

The enzyme catalyses N(6)-[(R)-S(8)-aminomethyldihydrolipoyl]-L-lysyl-[protein] + (6S)-5,6,7,8-tetrahydrofolate = N(6)-[(R)-dihydrolipoyl]-L-lysyl-[protein] + (6R)-5,10-methylene-5,6,7,8-tetrahydrofolate + NH4(+). The glycine cleavage system catalyzes the degradation of glycine. This is Aminomethyltransferase from Xylella fastidiosa (strain 9a5c).